A 286-amino-acid chain; its full sequence is Bifunctional protein FolD (286 aa).

NADP(+) contacts are provided by residues 165-167, Ser190, and Val231; that span reads GRS.

It belongs to the tetrahydrofolate dehydrogenase/cyclohydrolase family. In terms of assembly, homodimer.

The enzyme catalyses (6R)-5,10-methylene-5,6,7,8-tetrahydrofolate + NADP(+) = (6R)-5,10-methenyltetrahydrofolate + NADPH. The catalysed reaction is (6R)-5,10-methenyltetrahydrofolate + H2O = (6R)-10-formyltetrahydrofolate + H(+). Its pathway is one-carbon metabolism; tetrahydrofolate interconversion. Its function is as follows. Catalyzes the oxidation of 5,10-methylenetetrahydrofolate to 5,10-methenyltetrahydrofolate and then the hydrolysis of 5,10-methenyltetrahydrofolate to 10-formyltetrahydrofolate. The polypeptide is Bifunctional protein FolD (Bacillus anthracis (strain A0248)).